A 54-amino-acid polypeptide reads, in one-letter code: Ovomucoid (54 aa).

In terms of domain architecture, Kazal-like spans 4 to 54; the sequence is VDCSDHPKPVCSLEYMPLCGSDSKTYSNKCDFCNAVVESNGTLTLSHFGKC. Intrachain disulfides connect Cys6–Cys36, Cys14–Cys33, and Cys22–Cys54. Asn43 is a glycosylation site (N-linked (GlcNAc...) asparagine).

Its subcellular location is the secreted. The protein is Ovomucoid of Rhea americana (Greater rhea).